The primary structure comprises 212 residues: ATP-dependent Clp protease proteolytic subunit (212 aa).

Ser114 functions as the Nucleophile in the catalytic mechanism. His139 is an active-site residue.

Belongs to the peptidase S14 family. Fourteen ClpP subunits assemble into 2 heptameric rings which stack back to back to give a disk-like structure with a central cavity, resembling the structure of eukaryotic proteasomes.

It is found in the cytoplasm. The catalysed reaction is Hydrolysis of proteins to small peptides in the presence of ATP and magnesium. alpha-casein is the usual test substrate. In the absence of ATP, only oligopeptides shorter than five residues are hydrolyzed (such as succinyl-Leu-Tyr-|-NHMec, and Leu-Tyr-Leu-|-Tyr-Trp, in which cleavage of the -Tyr-|-Leu- and -Tyr-|-Trp bonds also occurs).. Functionally, cleaves peptides in various proteins in a process that requires ATP hydrolysis. Has a chymotrypsin-like activity. Plays a major role in the degradation of misfolded proteins. This chain is ATP-dependent Clp protease proteolytic subunit, found in Aromatoleum aromaticum (strain DSM 19018 / LMG 30748 / EbN1) (Azoarcus sp. (strain EbN1)).